A 22-amino-acid chain; its full sequence is Unknown protein 20 from 2D-PAGE (22 aa).

The chain is Unknown protein 20 from 2D-PAGE from Bombyx mori (Silk moth).